Consider the following 263-residue polypeptide: Cell division coordinator CpoB (263 aa).

Residues 1-26 (MSSNFRHQLLSLSLLVGIAAPWAAFA) form the signal peptide. The stretch at 44 to 88 (QLERISNAHSQLLTQLQQQLSDNQSDIDSLRGQIQENQYQLNQVV) forms a coiled coil. The segment covering 106 to 123 (AAAQSTSGDQSGAAASTT) has biased composition (low complexity). Positions 106–139 (AAAQSTSGDQSGAAASTTPTADAGTANAGAPVKS) are disordered. 3 TPR repeats span residues 143–176 (NTDY…YPDS), 180–213 (PNAN…YPKS), and 217–250 (ADAM…YPGT).

It belongs to the CpoB family. In terms of assembly, homotrimer. Interacts directly with the central domain of TolA and with PBP1B. Binding to TolA disrupts the homotrimer to form a YbgF/TolA heterodimer with weak affinity. Forms a quaternary complex with PBP1B-LpoB and TolA.

The protein localises to the periplasm. In terms of biological role, mediates coordination of peptidoglycan synthesis and outer membrane constriction during cell division. Promotes physical and functional coordination of the PBP1B-LpoB and Tol machines, and regulates PBP1B activity in response to Tol energy state. In Escherichia coli (strain K12), this protein is Cell division coordinator CpoB.